The primary structure comprises 172 residues: Regulator of hemoglobinization and erythroid cell expansion protein (172 aa).

The helical transmembrane segment at Trp9–Ile29 threads the bilayer. Residues Val52–Gln106 form a disordered region. The span at Ala64–Asp89 shows a compositional bias: basic and acidic residues. A compositionally biased stretch (low complexity) spans Pro91–Pro103. 2 positions are modified to phosphotyrosine: Tyr132 and Tyr141.

Interacts with EPOR; this interaction occurs in a erythropoietin (EPO)-dependent manner. Interacts with JAK2; this interaction occurs in a erythropoietin (EPO)-dependent manner. Interacts (via tyrosine-phosphorylated form) with GRB2. In terms of processing, phosphorylated. Phosphorylation on Tyr-132 and Tyr-141 occurs in a erythropoietin (EPO)-dependent manner. As to expression, expressed in the proerythroblasts (at protein level). Expressed strongly in the kidney. Expressed weakly in the pancreas, liver and lung. Expressed strongly in erythroid progenitor cells (EPCs). Expressed weakly in T-cells and neutrophils.

The protein resides in the cell membrane. In terms of biological role, acts as a signaling transduction factor of the EPO-EPOR signaling pathway promoting erythroid cell differentiation. The chain is Regulator of hemoglobinization and erythroid cell expansion protein from Homo sapiens (Human).